The sequence spans 332 residues: Heat-inducible transcription repressor HrcA (332 aa).

This sequence belongs to the HrcA family.

In terms of biological role, negative regulator of class I heat shock genes (grpE-dnaK-dnaJ and groELS operons). Prevents heat-shock induction of these operons. In Mycoplasma mobile (strain ATCC 43663 / 163K / NCTC 11711) (Mesomycoplasma mobile), this protein is Heat-inducible transcription repressor HrcA.